A 100-amino-acid chain; its full sequence is Apolipoprotein C-II (100 aa).

The N-terminal stretch at 1–25 (MDARSLLLLWLLLPLLLLLGCEVQG) is a signal peptide. A lipid binding region spans residues 65 to 73 (AVDETIRDI). Residues 77-100 (GSAAISTYTGILTDQILTMLQGKQ) form a lipoprotein lipase cofactor region.

It belongs to the apolipoprotein C2 family. In terms of processing, proapolipoprotein C-II is synthesized as a sialic acid containing glycoprotein which is subsequently desialylated prior to its proteolytic processing. Proapolipoprotein C-II, the major form found in plasma undergoes proteolytic cleavage of its N-terminal hexapeptide to generate apolipoprotein C-II, which occurs as the minor form in plasma. Liver.

It localises to the secreted. In terms of biological role, component of chylomicrons, very low-density lipoproteins (VLDL), low-density lipoproteins (LDL), and high-density lipoproteins (HDL) in plasma. Plays an important role in lipoprotein metabolism as an activator of lipoprotein lipase. Both proapolipoprotein C-II and apolipoprotein C-II can activate lipoprotein lipase. The sequence is that of Apolipoprotein C-II (APOC2) from Cavia porcellus (Guinea pig).